Consider the following 141-residue polypeptide: Myosin regulatory light chain cdc4 (141 aa).

2 positions are modified to phosphoserine: Ser2 and Ser6. 3 EF-hand domains span residues 3–38 (TDDS…CGQN), 74–109 (GDPE…LGEK), and 109–141 (KLSN…ILAN). Ca(2+) contacts are provided by Asp87, Asp89, Thr91, Met93, and Glu98.

As to quaternary structure, binds to myosin II chains myo2 and myo3. Interacts with vps27 and a PI 4-kinase pik1. Phosphorylated on either Ser-2 or Ser-6 but not both. Phosphorylation is not essential for the function of the protein.

The protein resides in the cytoplasm. Functionally, involved in cytokinesis. Required for the formation and function of the contractile ring. The sequence is that of Myosin regulatory light chain cdc4 (cdc4) from Schizosaccharomyces pombe (strain 972 / ATCC 24843) (Fission yeast).